The sequence spans 536 residues: Apoptosis inhibitor 5 homolog (536 aa).

A disordered region spans residues 462–536 (ITFGEKAAAN…GYRNRRFNKY (75 aa)). Residues 472-487 (GKDKDQEPEKKSRPSN) are compositionally biased toward basic and acidic residues. Residues 498-507 (KYSNKVNQSY) show a composition bias toward polar residues. Residues 516–528 (RGGGGGGGSGGGY) are compositionally biased toward gly residues.

It belongs to the API5 family.

The protein localises to the nucleus. Antiapoptotic factor. Also known to efficiently suppress E2F1-induced apoptosis. This Drosophila melanogaster (Fruit fly) protein is Apoptosis inhibitor 5 homolog.